The sequence spans 197 residues: Outer membrane protein 26 (197 aa).

Positions 1-23 (MKNIAKVTALALGIALASGYASA) are cleaved as a signal peptide.

The protein belongs to the Skp family.

The protein localises to the cell outer membrane. This chain is Outer membrane protein 26 (omp26), found in Haemophilus influenzae (strain ATCC 51907 / DSM 11121 / KW20 / Rd).